Consider the following 93-residue polypeptide: Large ribosomal subunit protein uL23cz/uL23cy (93 aa).

The protein belongs to the universal ribosomal protein uL23 family. In terms of assembly, part of the 50S ribosomal subunit.

It localises to the plastid. Its subcellular location is the chloroplast. Its function is as follows. Binds to 23S rRNA. The chain is Large ribosomal subunit protein uL23cz/uL23cy (rpl23-A) from Acorus calamus (Sweet flag).